Reading from the N-terminus, the 152-residue chain is SsrA-binding protein (152 aa).

The protein belongs to the SmpB family.

It is found in the cytoplasm. In terms of biological role, required for rescue of stalled ribosomes mediated by trans-translation. Binds to transfer-messenger RNA (tmRNA), required for stable association of tmRNA with ribosomes. tmRNA and SmpB together mimic tRNA shape, replacing the anticodon stem-loop with SmpB. tmRNA is encoded by the ssrA gene; the 2 termini fold to resemble tRNA(Ala) and it encodes a 'tag peptide', a short internal open reading frame. During trans-translation Ala-aminoacylated tmRNA acts like a tRNA, entering the A-site of stalled ribosomes, displacing the stalled mRNA. The ribosome then switches to translate the ORF on the tmRNA; the nascent peptide is terminated with the 'tag peptide' encoded by the tmRNA and targeted for degradation. The ribosome is freed to recommence translation, which seems to be the essential function of trans-translation. This chain is SsrA-binding protein, found in Rickettsia akari (strain Hartford).